The chain runs to 492 residues: Auxin transporter-like protein 1 (492 aa).

The Cytoplasmic portion of the chain corresponds to 1-67 (MVPREQAEEA…DAWFSCASNQ (67 aa)). The chain crosses the membrane as a helical span at residues 68–85 (VAQVLLTLPYSFSQLGML). Topologically, residues 86-87 (SG) are extracellular. Residues 88–108 (VLLQLFYGFMGSWTAYLISVL) form a helical membrane-spanning segment. At 109–143 (YVEYRSRKEKEGVSFKNHVIQWFEVLDGLLGPYWK) the chain is on the cytoplasmic side. A helical transmembrane segment spans residues 144-164 (AAGLAFNCTFLLFGSVIQLIA). Residues 165–180 (CASNIYYINDRLDKRT) lie on the Extracellular side of the membrane. Residues 181–201 (WTYIFGACCATTVFIPSFHNY) traverse the membrane as a helical segment. Position 202 (R202) is a topological domain, cytoplasmic. The helical transmembrane segment at 203-223 (IWSFLGLGMTTYTAWYLAIAA) threads the bilayer. At 224 to 240 (LLNGQAEGITHTGPTKL) the chain is on the extracellular side. A helical transmembrane segment spans residues 241 to 261 (VLYFTGATNILYTFGGHAVTV). Residues 262–274 (EIMHAMWKPAKFK) are Cytoplasmic-facing. A helical transmembrane segment spans residues 275 to 295 (YIYLLATLYVFTLTLPSASAM). The Extracellular portion of the chain corresponds to 296-322 (YWAFGDELLTHSNAFSLLPKTGWRDAA). The helical transmembrane segment at 323 to 343 (VILMLIHQFITFGFACTPLYF) threads the bilayer. Residues 344–364 (VWEKVIGMHDTKSICLRALAR) are Cytoplasmic-facing. The helical transmembrane segment at 365 to 385 (LPIVVPIWFLAIIFPFFGPIN) threads the bilayer. A topological domain (extracellular) is located at residue S386. Residues 387–407 (AVGALLVSFTVYIIPALAHIL) form a helical membrane-spanning segment. Residues 408–432 (TYRTASARMNAAEKPPFFLPSWTGM) lie on the Cytoplasmic side of the membrane. Residues 433 to 453 (FVLNMFIVVWVLVVGFGLGGW) form a helical membrane-spanning segment. At 454-492 (ASMVNFIRQIDTFGLFAKCYQCPKPAPALAQSPVPLPHH) the chain is on the extracellular side.

This sequence belongs to the amino acid/polyamine transporter 2 family. Amino acid/auxin permease (AAAP) (TC 2.A.18.1) subfamily.

The protein localises to the cell membrane. Carrier protein involved in proton-driven auxin influx. May mediate the formation of auxin gradient from developing leaves (site of auxin biosynthesis) to tips. In Oryza sativa subsp. japonica (Rice), this protein is Auxin transporter-like protein 1.